Consider the following 239-residue polypeptide: Uridylate kinase (239 aa).

Residue 12–15 (KLSG) participates in ATP binding. A UMP-binding site is contributed by G53. Positions 54 and 58 each coordinate ATP. Residues D73 and 135 to 142 (TGSPCFTT) contribute to the UMP site. ATP is bound by residues T162, Y168, and D171.

The protein belongs to the UMP kinase family. Homohexamer.

Its subcellular location is the cytoplasm. The catalysed reaction is UMP + ATP = UDP + ADP. It functions in the pathway pyrimidine metabolism; CTP biosynthesis via de novo pathway; UDP from UMP (UMPK route): step 1/1. Inhibited by UTP. Functionally, catalyzes the reversible phosphorylation of UMP to UDP. The sequence is that of Uridylate kinase from Ruthia magnifica subsp. Calyptogena magnifica.